The chain runs to 160 residues: Eukaryotic translation initiation factor 5A-4 (160 aa).

The segment covering 1 to 12 (MSDEEHHFESKA) has biased composition (basic and acidic residues). The disordered stretch occupies residues 1–21 (MSDEEHHFESKADAGASKTYP). Lys-52 carries the hypusine modification.

It belongs to the eIF-5A family. Post-translationally, lys-52 undergoes hypusination, a unique post-translational modification that consists in the addition of a butylamino group from spermidine to lysine side chain, leading to the formation of the unusual amino acid hypusine. eIF-5As are the only known proteins to undergo this modification, which is essential for their function.

Translation factor that promotes translation elongation and termination, particularly upon ribosome stalling at specific amino acid sequence contexts. Binds between the exit (E) and peptidyl (P) site of the ribosome and promotes rescue of stalled ribosome: specifically required for efficient translation of polyproline-containing peptides as well as other motifs that stall the ribosome. Acts as a ribosome quality control (RQC) cofactor by joining the RQC complex to facilitate peptidyl transfer during CAT tailing step. This chain is Eukaryotic translation initiation factor 5A-4, found in Solanum lycopersicum (Tomato).